Here is a 438-residue protein sequence, read N- to C-terminus: ATP-dependent RNA helicase RhlB (438 aa).

The Q motif signature appears at 9 to 37; it reads QRFADLPLHPEVKQALAENGFEFCTPIQA. Residues 40–219 enclose the Helicase ATP-binding domain; the sequence is LPVLLQSKDI…YDHMNEPVKV (180 aa). Residue 53–60 participates in ATP binding; the sequence is AQTGTGKT. Residues 165–168 carry the DEAD box motif; it reads DEAD. Residues 243–390 enclose the Helicase C-terminal domain; it reads KMRLLLTLIE…VSNYDSEALL (148 aa). The tract at residues 395–438 is disordered; that stretch reads TPAKIHRKHPSGTRNLRDRSGASRPGAQRSGARPPRHDRTRRHS. The segment covering 428–438 has biased composition (basic residues); sequence PPRHDRTRRHS.

It belongs to the DEAD box helicase family. RhlB subfamily. In terms of assembly, component of the RNA degradosome, which is a multiprotein complex involved in RNA processing and mRNA degradation.

The protein resides in the cytoplasm. It carries out the reaction ATP + H2O = ADP + phosphate + H(+). Functionally, DEAD-box RNA helicase involved in RNA degradation. Has RNA-dependent ATPase activity and unwinds double-stranded RNA. The sequence is that of ATP-dependent RNA helicase RhlB from Shewanella baltica (strain OS185).